Reading from the N-terminus, the 868-residue chain is Spindle and centriole-associated protein 1 (868 aa).

4 disordered regions span residues 129 to 154 (RTGF…DPGT), 172 to 201 (DDGG…HSNR), 229 to 250 (IAAQ…AEDQ), and 291 to 326 (KPLL…LASS). Composition is skewed to polar residues over residues 190-200 (ELPNSLSPHSN) and 229-245 (IAAQ…SSEL). Thr236 carries the phosphothreonine modification. Residue Ser240 is modified to Phosphoserine. Residues 315–326 (SSSTTSADLASS) are compositionally biased toward low complexity. The stretch at 381-434 (RYLKESETQLRKEVETRQQLEQMLGDHRELIDALTAEILLLREENGAVQARLQQ) forms a coiled coil. 2 disordered regions span residues 630–664 (PQFV…LGDG) and 702–722 (SSGG…NASE). Residues 634 to 649 (SLSQPPCSSPPSTQQS) are compositionally biased toward low complexity. Phosphoserine is present on Ser655. Residues 706–715 (EHGDGLREPS) show a composition bias toward basic and acidic residues. The stretch at 736–764 (SSMEERIAELNRQSMEARSKLLQLIEQQK) forms a coiled coil. Ser772, Ser773, Ser776, and Ser831 each carry phosphoserine. The tract at residues 805–868 (SSKCNTVSPV…GWFALSAHLP (64 aa)) is disordered. Positions 812-831 (SPVSGVSSRRSSGAISNSCS) are enriched in low complexity.

Interacts with CEP120.

It localises to the cytoplasm. The protein localises to the cytoskeleton. The protein resides in the microtubule organizing center. Its subcellular location is the centrosome. It is found in the centriole. It localises to the spindle. Regulator required for centriole duplication, for proper bipolar spindle formation and chromosome congression in mitosis. The polypeptide is Spindle and centriole-associated protein 1 (Spice1) (Rattus norvegicus (Rat)).